The sequence spans 163 residues: SsrA-binding protein (163 aa).

It belongs to the SmpB family.

It is found in the cytoplasm. Functionally, required for rescue of stalled ribosomes mediated by trans-translation. Binds to transfer-messenger RNA (tmRNA), required for stable association of tmRNA with ribosomes. tmRNA and SmpB together mimic tRNA shape, replacing the anticodon stem-loop with SmpB. tmRNA is encoded by the ssrA gene; the 2 termini fold to resemble tRNA(Ala) and it encodes a 'tag peptide', a short internal open reading frame. During trans-translation Ala-aminoacylated tmRNA acts like a tRNA, entering the A-site of stalled ribosomes, displacing the stalled mRNA. The ribosome then switches to translate the ORF on the tmRNA; the nascent peptide is terminated with the 'tag peptide' encoded by the tmRNA and targeted for degradation. The ribosome is freed to recommence translation, which seems to be the essential function of trans-translation. This is SsrA-binding protein from Corynebacterium diphtheriae (strain ATCC 700971 / NCTC 13129 / Biotype gravis).